The sequence spans 201 residues: Desiccation-related protein PCC3-06 (201 aa).

Residues 41–54 (TVASQSQGRQQVSE) are compositionally biased toward polar residues. 2 disordered regions span residues 41-155 (TVAS…QNVK) and 177-201 (MGKS…TNYF). Basic and acidic residues-rich tracts occupy residues 57–76 (EDAK…KTSE), 108–144 (GELK…ERVA), and 177–193 (MGKS…ETKK).

It belongs to the LEA type 1 family.

The chain is Desiccation-related protein PCC3-06 from Craterostigma plantagineum (Blue gem).